We begin with the raw amino-acid sequence, 315 residues long: Tetraacyldisaccharide 4'-kinase (315 aa).

52–59 (TVGGTGKT) is a binding site for ATP.

It belongs to the LpxK family.

The catalysed reaction is a lipid A disaccharide + ATP = a lipid IVA + ADP + H(+). It functions in the pathway glycolipid biosynthesis; lipid IV(A) biosynthesis; lipid IV(A) from (3R)-3-hydroxytetradecanoyl-[acyl-carrier-protein] and UDP-N-acetyl-alpha-D-glucosamine: step 6/6. In terms of biological role, transfers the gamma-phosphate of ATP to the 4'-position of a tetraacyldisaccharide 1-phosphate intermediate (termed DS-1-P) to form tetraacyldisaccharide 1,4'-bis-phosphate (lipid IVA). The protein is Tetraacyldisaccharide 4'-kinase of Ruthia magnifica subsp. Calyptogena magnifica.